The following is a 374-amino-acid chain: MLTEHWLAWLYWNPPREAFTLPFIDHPVMWYGICFITGFILGYFIIVPIIALFVNQSKHLSSMDIQDWRSLVNQLKTSSSPLIQKCQNALNRQERQKLNSEIQPLNISSDLKNALLIKLNTILKENSIQRKDLEQAFQGAITSAKQISYFLADRLCWFIVFGTLIGARLGAVFFYDWNYFKSHPLEIFEVWKGGLASHGGALGVMLALFFYTSYIKKWTPTLSFLRVLDFVAIPSALTAVFIRIGNFFNQEIIGTPSAYPWAVLFAQPADGSLPIPRHPVQLYEAFAYLMTFFLLFTLWKKCNTCLAAGTYAGFLFIFNFSSRFLLEFWKANLDSILTNPILQMGQLLSIPFILFGICLVWRKQNWQNLFCCHR.

4 helical membrane passes run 33–53 (ICFI…IALF), 155–175 (LCWF…VFFY), 195–215 (LASH…TSYI), and 222–242 (LSFL…AVFI). An a 1,2-diacyl-sn-glycero-3-phospho-(1'-sn-glycerol)-binding site is contributed by R243. 3 helical membrane passes run 279–299 (PVQL…FTLW), 306–326 (LAAG…RFLL), and 341–361 (ILQM…CLVW).

This sequence belongs to the Lgt family.

The protein localises to the cell inner membrane. The enzyme catalyses L-cysteinyl-[prolipoprotein] + a 1,2-diacyl-sn-glycero-3-phospho-(1'-sn-glycerol) = an S-1,2-diacyl-sn-glyceryl-L-cysteinyl-[prolipoprotein] + sn-glycerol 1-phosphate + H(+). It functions in the pathway protein modification; lipoprotein biosynthesis (diacylglyceryl transfer). Catalyzes the transfer of the diacylglyceryl group from phosphatidylglycerol to the sulfhydryl group of the N-terminal cysteine of a prolipoprotein, the first step in the formation of mature lipoproteins. This chain is Phosphatidylglycerol--prolipoprotein diacylglyceryl transferase, found in Protochlamydia amoebophila (strain UWE25).